A 989-amino-acid polypeptide reads, in one-letter code: Bifunctional glutamine synthetase adenylyltransferase/adenylyl-removing enzyme (989 aa).

Positions 1 to 474 are adenylyl removase; that stretch reads MNSSAIDADI…HYGKLFEGDP (474 aa). Positions 480-989 are adenylyl transferase; the sequence is LPIDYAGGPD…FNRLIGGDSA (510 aa).

The protein belongs to the GlnE family. The cofactor is Mg(2+).

It catalyses the reaction [glutamine synthetase]-O(4)-(5'-adenylyl)-L-tyrosine + phosphate = [glutamine synthetase]-L-tyrosine + ADP. The catalysed reaction is [glutamine synthetase]-L-tyrosine + ATP = [glutamine synthetase]-O(4)-(5'-adenylyl)-L-tyrosine + diphosphate. Its function is as follows. Involved in the regulation of glutamine synthetase GlnA, a key enzyme in the process to assimilate ammonia. When cellular nitrogen levels are high, the C-terminal adenylyl transferase (AT) inactivates GlnA by covalent transfer of an adenylyl group from ATP to specific tyrosine residue of GlnA, thus reducing its activity. Conversely, when nitrogen levels are low, the N-terminal adenylyl removase (AR) activates GlnA by removing the adenylyl group by phosphorolysis, increasing its activity. The regulatory region of GlnE binds the signal transduction protein PII (GlnB) which indicates the nitrogen status of the cell. The chain is Bifunctional glutamine synthetase adenylyltransferase/adenylyl-removing enzyme from Rhodopseudomonas palustris (strain BisB5).